A 177-amino-acid polypeptide reads, in one-letter code: Large ribosomal subunit protein uL16 (177 aa).

This sequence belongs to the universal ribosomal protein uL16 family.

This Natronomonas pharaonis (strain ATCC 35678 / DSM 2160 / CIP 103997 / JCM 8858 / NBRC 14720 / NCIMB 2260 / Gabara) (Halobacterium pharaonis) protein is Large ribosomal subunit protein uL16.